We begin with the raw amino-acid sequence, 152 residues long: Small heat shock protein HspA (152 aa).

In terms of domain architecture, sHSP spans 29-139 (TAGEANYPPC…KPRRIPIDNL (111 aa)).

Belongs to the small heat shock protein (HSP20) family.

In Bradyrhizobium diazoefficiens (strain JCM 10833 / BCRC 13528 / IAM 13628 / NBRC 14792 / USDA 110), this protein is Small heat shock protein HspA (hspA).